Consider the following 225-residue polypeptide: Small ribosomal subunit protein mS26 (225 aa).

Belongs to the mitochondrion-specific ribosomal protein mS26 family. Component of the mitochondrial ribosome small subunit (28S) which comprises a 12S rRNA and about 30 distinct proteins.

It localises to the mitochondrion. This chain is Small ribosomal subunit protein mS26 (mRpS26), found in Drosophila melanogaster (Fruit fly).